The primary structure comprises 294 residues: Antiviral protein alpha (294 aa).

The signal sequence occupies residues 1-24; the sequence is MKMMVVVVVMMLSWLILKPPSTWA. 2 disulfides stabilise this stretch: Cys-58–Cys-282 and Cys-108–Cys-130. Glu-199 is an active-site residue. The propeptide occupies 286 to 294; the sequence is YQSAMFPHL.

The protein belongs to the ribosome-inactivating protein family. Type 1 RIP subfamily. In terms of assembly, monomer.

The protein resides in the secreted. Its subcellular location is the cell wall. The enzyme catalyses Endohydrolysis of the N-glycosidic bond at one specific adenosine on the 28S rRNA.. Its function is as follows. Inhibits viral infection of plants, and protein synthesis in vitro. Has also been shown to inhibit the replication of mammalian viruses. The protein may provide a means of cellular suicide upon invasion by a virus. This is Antiviral protein alpha from Phytolacca americana (American pokeweed).